Consider the following 575-residue polypeptide: Phosphoenolpyruvate-protein phosphotransferase (575 aa).

Histidine 191 serves as the catalytic Tele-phosphohistidine intermediate. 2 residues coordinate phosphoenolpyruvate: arginine 298 and arginine 334. Positions 435 and 459 each coordinate Mg(2+). Phosphoenolpyruvate is bound by residues 458–459 (ND) and arginine 469. The active-site Proton donor is the cysteine 506.

Belongs to the PEP-utilizing enzyme family. In terms of assembly, homodimer. Mg(2+) serves as cofactor.

The protein localises to the cytoplasm. The enzyme catalyses L-histidyl-[protein] + phosphoenolpyruvate = N(pros)-phospho-L-histidyl-[protein] + pyruvate. Functionally, general (non sugar-specific) component of the phosphoenolpyruvate-dependent sugar phosphotransferase system (sugar PTS). This major carbohydrate active-transport system catalyzes the phosphorylation of incoming sugar substrates concomitantly with their translocation across the cell membrane. Enzyme I transfers the phosphoryl group from phosphoenolpyruvate (PEP) to the phosphoryl carrier protein (HPr). In Lactococcus lactis subsp. cremoris (Streptococcus cremoris), this protein is Phosphoenolpyruvate-protein phosphotransferase (ptsI).